We begin with the raw amino-acid sequence, 390 residues long: Heparan sulfate glucosamine 3-O-sulfotransferase 3B1 (390 aa).

The segment at 1-25 (MGQRLSGGRSCLDVPGRLLPQPPPP) is disordered. Residues 1–32 (MGQRLSGGRSCLDVPGRLLPQPPPPPPPVRRK) are Cytoplasmic-facing. A helical; Signal-anchor for type II membrane protein transmembrane segment spans residues 33 to 53 (LALLFAMLCVWLYMFLYSCAG). The Lumenal segment spans residues 54–390 (SCAAAPGLLL…QMTGHDFGWD (337 aa)). The tract at residues 74-133 (PPALATAPDGTPPRLPFRAPPATPLASGKEMAEGAASPEEQSPEVPDSPSPISSFFSGSG) is disordered. The segment covering 83–96 (GTPPRLPFRAPPAT) has biased composition (pro residues). Residues 123–133 (SPISSFFSGSG) show a composition bias toward low complexity. 147-151 (KGGTR) lines the 3'-phosphoadenylyl sulfate pocket. Residues 169 to 175 (EPHFFDR) and 200 to 203 (KTPS) each bind substrate. Positions 228 and 236 each coordinate 3'-phosphoadenylyl sulfate. An N-linked (GlcNAc...) asparagine glycan is attached at N258. 268 to 269 (WS) contacts substrate. N329 is a glycosylation site (N-linked (GlcNAc...) asparagine). Cysteines 336 and 348 form a disulfide. 3'-phosphoadenylyl sulfate is bound at residue 353 to 357 (KGRTH).

It belongs to the sulfotransferase 1 family. Ubiquitous. Most abundant in liver and placenta, followed by heart and kidney.

It is found in the golgi apparatus membrane. The catalysed reaction is alpha-D-glucosaminyl-[heparan sulfate](n) + 3'-phosphoadenylyl sulfate = 3-sulfo-alpha-D-glucosaminyl-[heparan sulfate](n) + adenosine 3',5'-bisphosphate + H(+). Functionally, sulfotransferase that utilizes 3'-phospho-5'-adenylyl sulfate (PAPS) to catalyze the transfer of a sulfo group to an N-unsubstituted glucosamine linked to a 2-O-sulfo iduronic acid unit on heparan sulfate. Catalyzes the O-sulfation of glucosamine in IdoUA2S-GlcNS and also in IdoUA2S-GlcNH2. The substrate-specific O-sulfation generates an enzyme-modified heparan sulfate which acts as a binding receptor to Herpes simplex virus-1 (HSV-1) and permits its entry. Unlike HS3ST1/3-OST-1, does not convert non-anticoagulant heparan sulfate to anticoagulant heparan sulfate. The chain is Heparan sulfate glucosamine 3-O-sulfotransferase 3B1 (HS3ST3B1) from Homo sapiens (Human).